We begin with the raw amino-acid sequence, 152 residues long: MNTELDLQIACEFDNLPSEAQFALWADKALSQYRDESELTIVISDEAQSQQLNNDYRGKNKPTNVLSFEFEAPPGIDIPLVGDLVICPAIVLAEAIEQEKSFHDHFAHMVIHGCLHLLGFDHIKSEDAFEMESIEKQLLAELNIADPYRDEI.

3 residues coordinate Zn(2+): His-112, His-116, and His-122.

The protein belongs to the endoribonuclease YbeY family. Zn(2+) serves as cofactor.

It localises to the cytoplasm. In terms of biological role, single strand-specific metallo-endoribonuclease involved in late-stage 70S ribosome quality control and in maturation of the 3' terminus of the 16S rRNA. The chain is Endoribonuclease YbeY from Pseudoalteromonas translucida (strain TAC 125).